Consider the following 133-residue polypeptide: Nucleoside diphosphate kinase (133 aa).

ATP is bound by residues lysine 9, phenylalanine 57, arginine 85, threonine 91, arginine 102, and asparagine 112. Histidine 115 acts as the Pros-phosphohistidine intermediate in catalysis.

The protein belongs to the NDK family. The cofactor is Mg(2+).

The protein localises to the cytoplasm. It catalyses the reaction a 2'-deoxyribonucleoside 5'-diphosphate + ATP = a 2'-deoxyribonucleoside 5'-triphosphate + ADP. The catalysed reaction is a ribonucleoside 5'-diphosphate + ATP = a ribonucleoside 5'-triphosphate + ADP. Its function is as follows. Major role in the synthesis of nucleoside triphosphates other than ATP. The ATP gamma phosphate is transferred to the NDP beta phosphate via a ping-pong mechanism, using a phosphorylated active-site intermediate. The protein is Nucleoside diphosphate kinase of Methanococcus maripaludis (strain DSM 14266 / JCM 13030 / NBRC 101832 / S2 / LL).